The following is a 242-amino-acid chain: Response regulator GtcR (242 aa).

Residues 4–117 (TILIADDEPE…EAVARIQAQL (114 aa)) form the Response regulatory domain. Residue D53 is modified to 4-aspartylphosphate. A DNA-binding region (ompR/PhoB-type) is located at residues 133–233 (TQSTTVGRLT…VRGLGYKFAS (101 aa)).

Phosphorylated by GtcS.

Member of the two-component regulatory system GtcS/GtcR which may act in the control of the transcription of the grs operon which encodes the multienzymes involved in the biosynthesis of the peptide antibiotic gramicidin S. The chain is Response regulator GtcR (gtcR) from Aneurinibacillus migulanus (Bacillus migulanus).